The primary structure comprises 121 residues: UPF0344 protein BC_1150 (121 aa).

The next 4 membrane-spanning stretches (helical) occupy residues 6–26 (ITAWALGLILFFVAYSLYSAG), 38–58 (LMYIIIIVTGFMLYMSIVKTA), 65–85 (WYGLKMLAGILVIGGMEMVLV), and 92–112 (PTGAVWGLFIVALVAVFYLGL).

It belongs to the UPF0344 family.

Its subcellular location is the cell membrane. The chain is UPF0344 protein BC_1150 from Bacillus cereus (strain ATCC 14579 / DSM 31 / CCUG 7414 / JCM 2152 / NBRC 15305 / NCIMB 9373 / NCTC 2599 / NRRL B-3711).